We begin with the raw amino-acid sequence, 136 residues long: Sec-independent protein translocase protein TatB (136 aa).

Residues 2–22 form a helical membrane-spanning segment; that stretch reads FGSVGWGELLVLLIVGLVVLG. The tract at residues 107–136 is disordered; the sequence is VTEPAPTPIVNPELAKPAEPGPTRYDADAT.

This sequence belongs to the TatB family. In terms of assembly, the Tat system comprises two distinct complexes: a TatABC complex, containing multiple copies of TatA, TatB and TatC subunits, and a separate TatA complex, containing only TatA subunits. Substrates initially bind to the TatABC complex, which probably triggers association of the separate TatA complex to form the active translocon.

The protein localises to the cell membrane. Part of the twin-arginine translocation (Tat) system that transports large folded proteins containing a characteristic twin-arginine motif in their signal peptide across membranes. Together with TatC, TatB is part of a receptor directly interacting with Tat signal peptides. TatB may form an oligomeric binding site that transiently accommodates folded Tat precursor proteins before their translocation. The sequence is that of Sec-independent protein translocase protein TatB from Mycobacteroides abscessus (strain ATCC 19977 / DSM 44196 / CCUG 20993 / CIP 104536 / JCM 13569 / NCTC 13031 / TMC 1543 / L948) (Mycobacterium abscessus).